Consider the following 142-residue polypeptide: Large ribosomal subunit protein uL13 (142 aa).

Belongs to the universal ribosomal protein uL13 family. As to quaternary structure, part of the 50S ribosomal subunit.

In terms of biological role, this protein is one of the early assembly proteins of the 50S ribosomal subunit, although it is not seen to bind rRNA by itself. It is important during the early stages of 50S assembly. This Nitrosococcus oceani (strain ATCC 19707 / BCRC 17464 / JCM 30415 / NCIMB 11848 / C-107) protein is Large ribosomal subunit protein uL13.